The sequence spans 352 residues: Keratocan (352 aa).

A signal peptide spans 1-20 (MASTICFILWVVFVTDTVWT). An LRRNT domain is found at 33 to 71 (EDWTMHDFDCPRECFCPPSFPTALYCENRGLKEIPAIPS). 2 disulfide bridges follow: C42-C48 and C46-C58. LRR repeat units follow at residues 72–93 (RIWYLYLENNLIETIPEKPFEN), 96–117 (QLRWINLNKNKITNYGIEKGAL), 122–142 (KLLFLFLEDNELEEVPSPLPR), 143–164 (SLEQLQLARNKVSRIPQGTFSN), 167–180 (NLTLLDLQHNKLLD), 193–214 (NLMQLNMAKNALRNMPPRLPAN), 215–235 (TMQVFLDNNSIEGIPENYFNV), and 238–258 (KVAFLRLNHNKLSDAGLPSSG). A glycan (N-linked (GlcNAc...) (keratan sulfate) asparagine) is linked at N93. N-linked (GlcNAc...) (keratan sulfate) asparagine glycosylation occurs at N167. N-linked (GlcNAc...) asparagine glycosylation is present at N222. N-linked (GlcNAc...) (keratan sulfate) asparagine glycosylation occurs at N260. LRR repeat units lie at residues 263–282 (SILDLQLSHNQLTKVPKISA) and 283–304 (HLQHLHLDHNKIRNVNVSVICP). N-linked (GlcNAc...) asparagine glycosylation occurs at N298. C303 and C343 are joined by a disulfide.

The protein belongs to the small leucine-rich proteoglycan (SLRP) family. SLRP class II subfamily. Post-translationally, binds three long, highly sulfated keratan sulfate chains in the cornea but short, non-sulfated poly(N-acetyllactosamine) chains in other tissues. In terms of processing, the N-terminus is blocked. Abundant in cornea and sclera but also found in other tissues.

It localises to the secreted. It is found in the extracellular space. The protein localises to the extracellular matrix. Its function is as follows. May be important in developing and maintaining corneal transparency and for the structure of the stromal matrix. This chain is Keratocan (KERA), found in Bos taurus (Bovine).